The primary structure comprises 56 residues: UPF0391 membrane protein Rru_A0119 (56 aa).

2 helical membrane-spanning segments follow: residues 4–24 and 30–50; these read WALI…GGIA and IAQI…IMHF.

Belongs to the UPF0391 family.

The protein resides in the cell membrane. In Rhodospirillum rubrum (strain ATCC 11170 / ATH 1.1.1 / DSM 467 / LMG 4362 / NCIMB 8255 / S1), this protein is UPF0391 membrane protein Rru_A0119.